A 177-amino-acid chain; its full sequence is Inorganic pyrophosphatase (177 aa).

Residues K31, R45, and Y57 each coordinate substrate. 3 residues coordinate Mg(2+): D67, D72, and D104. Substrate is bound at residue Y141.

Belongs to the PPase family. Homohexamer. Mg(2+) serves as cofactor.

The protein resides in the cytoplasm. It carries out the reaction diphosphate + H2O = 2 phosphate + H(+). Functionally, catalyzes the hydrolysis of inorganic pyrophosphate (PPi) forming two phosphate ions. The protein is Inorganic pyrophosphatase of Halobacterium salinarum (strain ATCC 700922 / JCM 11081 / NRC-1) (Halobacterium halobium).